A 297-amino-acid polypeptide reads, in one-letter code: E3 ubiquitin-protein ligase RNF212B (297 aa).

The RING-type zinc-finger motif lies at 6-40 (CNQCFRKDGAHFFVTSCGHIFCKKCMTLEKCAVCG). Residues 87 to 136 (LLIAFYKDRITKLEAAVKEAQEMAASQNKELSALRKENGELKKILDILKG) are a coiled coil. Disordered regions lie at residues 152–179 (VGITSPSQSVAPRPSSHHSSQVVSRSSS) and 198–269 (RGLH…ESLP). Residues 163–179 (PRPSSHHSSQVVSRSSS) show a composition bias toward low complexity. Over residues 206-234 (PGDSYTETPSPASTHSLSYRPSSASSGQG) the composition is skewed to polar residues.

In terms of assembly, homodimer. In terms of processing, autoubiquitinated.

The protein localises to the chromosome. It carries out the reaction S-ubiquitinyl-[E2 ubiquitin-conjugating enzyme]-L-cysteine + [acceptor protein]-L-lysine = [E2 ubiquitin-conjugating enzyme]-L-cysteine + N(6)-ubiquitinyl-[acceptor protein]-L-lysine.. The protein operates within protein modification; protein ubiquitination. Ubiquitin E3 ligase that acts as a crucial factor for crossing-over (CO) formation during meiosis. Essential for normal prophase I progression and for ensuring appropriate CO designation in meiosis. Recruits key components of the cross-over machinery either directly ou indirectly, leading to the activation of the MutL-gamma complex. The function of RNF212B in CO designation is dependent on its catalytic activity. This chain is E3 ubiquitin-protein ligase RNF212B (Rnf212b), found in Mus musculus (Mouse).